We begin with the raw amino-acid sequence, 448 residues long: Phosphoglucosamine mutase (448 aa).

Residue serine 100 is the Phosphoserine intermediate of the active site. Residues serine 100, aspartate 240, aspartate 242, and aspartate 244 each contribute to the Mg(2+) site. Serine 100 is modified (phosphoserine).

This sequence belongs to the phosphohexose mutase family. Mg(2+) is required as a cofactor. In terms of processing, activated by phosphorylation.

The enzyme catalyses alpha-D-glucosamine 1-phosphate = D-glucosamine 6-phosphate. In terms of biological role, catalyzes the conversion of glucosamine-6-phosphate to glucosamine-1-phosphate. The polypeptide is Phosphoglucosamine mutase (Clostridium perfringens (strain SM101 / Type A)).